The chain runs to 361 residues: MATTYRIAVLAGDGIGPEITAVALDVLRAIAPRFGLDFDFVPALVGGCAIDAVGEPLPAATLATCRQSDAVLLAAIGGTQWDSLPRHLRPETGLLALRSGLGLFANLRPAKIFPQLLHASSLKPEVIAGVDLMVVRELTGGIYFGQPRGIFTTETGEQRGVNTMAYTATEIDRIGRVAFETARKRQGKLCSVDKANVLEVSQLWRDRLTALSAEYPDVELTHLYVDNAAMQLVRAPKQFDTIVTSNLFGDILSDIAAMLTGSIGMLPSASLGESGPALFEPVHGSAPDIAGQDKANPLAMVLSAAMMLRYGLNQPAAAQAIEEAITAVLDQGYRTGDLMSEGCTLVGCREMGNLLIKELSR.

78 to 91 (GTQWDSLPRHLRPE) is an NAD(+) binding site. Substrate contacts are provided by Arg-98, Arg-108, Arg-136, and Asp-226. The Mg(2+) site is built by Asp-226, Asp-250, and Asp-254. Position 284 to 296 (284 to 296 (GSAPDIAGQDKAN)) interacts with NAD(+).

Belongs to the isocitrate and isopropylmalate dehydrogenases family. LeuB type 1 subfamily. In terms of assembly, homodimer. Mg(2+) serves as cofactor. It depends on Mn(2+) as a cofactor.

It is found in the cytoplasm. The enzyme catalyses (2R,3S)-3-isopropylmalate + NAD(+) = 4-methyl-2-oxopentanoate + CO2 + NADH. It functions in the pathway amino-acid biosynthesis; L-leucine biosynthesis; L-leucine from 3-methyl-2-oxobutanoate: step 3/4. Functionally, catalyzes the oxidation of 3-carboxy-2-hydroxy-4-methylpentanoate (3-isopropylmalate) to 3-carboxy-4-methyl-2-oxopentanoate. The product decarboxylates to 4-methyl-2 oxopentanoate. The protein is 3-isopropylmalate dehydrogenase of Thermosynechococcus vestitus (strain NIES-2133 / IAM M-273 / BP-1).